A 714-amino-acid chain; its full sequence is MGRRSALALAVVSALLCQVWSSGVFELKLQEFVNKKGLLGNRNCCRGGSGPPCACRTFFRVCLKHYQASVSPEPPCTYGSAVTAVLGVDSFSLPDGAGIDPAFSNPIRFPFGFTWPGTFSLIIEALHTDSPDDLATENPERLISRLTTQRHLTVGEEWSQDLHSSGRTDLRYSYRFVCDEHYYGEGCSVFCRPRDDAFGHFTCGERGEKMCDPGWKGQYCTDPICLPGCDDQHGYCDKPGECKCRVGWQGRYCDECIRYPGCLHGTCQQPWQCNCQEGWGGLFCNQDLNYCTHHKPCRNGATCTNTGQGSYTCSCRPGYTGANCELEVDECAPSPCRNGGSCTDLEDSYSCTCPPGFYGKVCELSAMTCADGPCFNGGRCSDNPDGGYTCHCPAGFSGFNCEKKIDLCSSSPCSNGAKCVDLGNSYLCRCQTGFSGRYCEDNVDDCASSPCANGGTCRDSVNDFSCTCPPGYTGRNCSAPVSRCEHAPCHNGATCHQRGQRYMCECAQGYGGANCQFLLPEPPPDLIVAAQGGSFPWVAVCAGVVLVLLLLLGCAAVVVCVRLKLQKHQPPPDPCGGETETMNNLANCQREKDVSVSIIGATQIKNTNKKADFHGDHGADKSSFKARYPTVDYNLIRDLKGDEATVRDAHSKRDTKCQSQGSVGEEKSTSTLRGGEVPDRKRPESVYSTSKDTKYQSVYVLSAEKDECVIATEV.

Positions 1-17 are cleaved as a signal peptide; the sequence is MGRRSALALAVVSALLC. Residues 18-537 are Extracellular-facing; it reads QVWSSGVFEL…VAAQGGSFPW (520 aa). The region spanning 176–220 is the DSL domain; it reads FVCDEHYYGEGCSVFCRPRDDAFGHFTCGERGEKMCDPGWKGQYC. 27 disulfide bridges follow: Cys-178–Cys-187, Cys-191–Cys-203, Cys-211–Cys-220, Cys-225–Cys-236, Cys-229–Cys-242, Cys-244–Cys-253, Cys-256–Cys-267, Cys-262–Cys-273, Cys-275–Cys-284, Cys-291–Cys-303, Cys-297–Cys-313, Cys-315–Cys-324, Cys-331–Cys-342, Cys-336–Cys-351, Cys-353–Cys-362, Cys-369–Cys-380, Cys-374–Cys-390, Cys-392–Cys-401, Cys-408–Cys-419, Cys-413–Cys-428, Cys-430–Cys-439, Cys-446–Cys-457, Cys-451–Cys-466, Cys-468–Cys-477, Cys-484–Cys-495, Cys-489–Cys-504, and Cys-506–Cys-515. EGF-like domains follow at residues 225–253, 256–284, and 291–324; these read CLPGCDDQHGYCDKPGECKCRVGWQGRYC, CIRYPGCLHGTCQQPWQCNCQEGWGGLFC, and CTHHKPCRNGATCTNTGQGSYTCSCRPGYTGANC. Residues 331–362 form the EGF-like 4; calcium-binding domain; the sequence is CAPSPCRNGGSCTDLEDSYSCTCPPGFYGKVC. EGF-like domains are found at residues 369 to 401 and 408 to 439; these read CADGPCFNGGRCSDNPDGGYTCHCPAGFSGFNC and CSSSPCSNGAKCVDLGNSYLCRCQTGFSGRYC. Positions 446 to 477 constitute an EGF-like 7; calcium-binding domain; sequence CASSPCANGGTCRDSVNDFSCTCPPGYTGRNC. The N-linked (GlcNAc...) asparagine glycan is linked to Asn-476. In terms of domain architecture, EGF-like 8 spans 484–515; that stretch reads CEHAPCHNGATCHQRGQRYMCECAQGYGGANC. Residues 538–560 form a helical membrane-spanning segment; it reads VAVCAGVVLVLLLLLGCAAVVVC. At 561–714 the chain is on the cytoplasmic side; that stretch reads VRLKLQKHQP…KDECVIATEV (154 aa). A Glycyl lysine isopeptide (Lys-Gly) (interchain with G-Cter in ubiquitin) cross-link involves residue Lys-605. Thr-630 bears the Phosphothreonine mark. A compositionally biased stretch (basic and acidic residues) spans 644 to 656; that stretch reads ATVRDAHSKRDTK. The tract at residues 644 to 690 is disordered; it reads ATVRDAHSKRDTKCQSQGSVGEEKSTSTLRGGEVPDRKRPESVYSTS. A Phosphoserine; by PKB modification is found at Ser-685. Position 688 is a phosphoserine (Ser-688). The interaction with MAGI1 stretch occupies residues 711-714; the sequence is ATEV.

Homodimer. Interacts with TJP1. Interacts with MAGI1 (via PDZ domain); forms a complex with CTNNB1 and CDH2 and promotes recruitment to the adherens junction and stabilization on the cell surface. Interacts with PSEN1; undergoes a presenilin-dependent gamma-secretase cleavage that releases a Dll1-intracellular form. Interacts with MFAP5. Interacts with MIB1. Interacts with NEURL1B; leads to ubiquitination. Interacts with NEURL1. Interacts with SYNJ2BP; enhances DLL1 protein stability, and promotes Notch signaling in endothelial cells. Interacts with MAGI1, MAGI2, MAGI3 and MPDZ. Interacts (via ubiquitin) with EPN1 (via IUM domain); binding with NOTCH1 attached to neighboring cell, promotes ligand ubiquitination and EPN1 interaction, leading to NECD transendocytosis and Notch signaling. Interacts with NOTCH1. Ubiquitinated by MIB (MIB1 or MIB2), leading to its endocytosis and subsequent degradation. Ubiquitinated; promotes recycling back to the plasma membrane and confers a strong affinity for NOTCH1. Mono- and multi-ubiquitinated. Multi-ubiquitination of Lys-605 by MIB1 promotes both cis and trans-interaction with NOTCH1, as well as activation of Notch signaling. Ubiquitinated by NEURL1B. In terms of processing, phosphorylated in a membrane association-dependent manner. Phosphorylation at Ser-688 requires the presence of Ser-685, whereas phosphorylation at Thr-630 and Ser-685 occur independently of the other sites. Phosphorylation is required for full ligand activity in vitro and affects surface presentation, ectodomain shedding, and endocytosis. Post-translationally, O-fucosylated. Can be elongated to a disaccharide by MFNG.

It is found in the apical cell membrane. Its subcellular location is the cell junction. The protein resides in the adherens junction. It localises to the membrane raft. Transmembrane ligand protein of NOTCH1, NOTCH2 and NOTCH3 receptors that binds the extracellular domain (ECD) of Notch receptor in a cis and trans fashion manner. Following transinteraction, ligand cells produce mechanical force that depends of a clathrin-mediated endocytosis, requiring ligand ubiquitination, EPN1 interaction, and actin polymerisation; these events promote Notch receptor extracellular domain (NECD) transendocytosis and triggers Notch signaling through induction of cleavage, hyperphosphorylation, and nuclear accumulation of the intracellular domain of Notch receptors (NICD). Is required for embryonic development and maintenance of adult stem cells in many different tissues and immune systeme; the DLL1-induced Notch signaling is mediated through an intercellular communication that regulates cell lineage, cell specification, cell patterning and morphogenesis through effects on differentiation and proliferation. Plays a role in brain development at different level, namely by regulating neuronal differentiation of neural precursor cells via cell-cell interaction, most likely through the lateral inhibitory system in an endogenous level dependent-manner. During neocortex development, Dll1-Notch signaling transmission is mediated by dynamic interactions between intermediate neurogenic progenitors and radial glia; the cell-cell interactions are mediated via dynamic and transient elongation processes, likely to reactivate/maintain Notch activity in neighboring progenitors, and coordinate progenitor cell division and differentiation across radial and zonal boundaries. During cerebellar development, regulates Bergmann glial monolayer formation and its morphological maturation through a Notch signaling pathway. At the retina and spinal cord level, regulates neurogenesis by preventing the premature differentiation of neural progenitors and also by maintaining progenitors in spinal cord through Notch signaling pathway. Also controls neurogenesis of the neural tube in a progenitor domain-specific fashion along the dorsoventral axis. Maintains quiescence of neural stem cells and plays a role as a fate determinant that segregates asymmetrically to one daughter cell during neural stem cells mitosis, resulting in neuronal differentiation in Dll1-inheriting cell. Plays a role in immune systeme development, namely the development of all T-cells and marginal zone (MZ) B cells. Blocks the differentiation of progenitor cells into the B-cell lineage while promoting the emergence of a population of cells with the characteristics of a T-cell/NK-cell precursor. Also plays a role during muscle development. During early development, inhibits myoblasts differentiation from the medial dermomyotomal lip and later regulates progenitor cell differentiation. Directly modulates cell adhesion and basal lamina formation in satellite cells through Notch signaling. Maintains myogenic progenitors pool by suppressing differentiation through down-regulation of MYOD1 and is required for satellite cell homing and PAX7 expression. During craniofacial and trunk myogenesis suppresses differentiation of cranial mesoderm-derived and somite-derived muscle via MYOD1 regulation but in cranial mesoderm-derived progenitors, is neither required for satellite cell homing nor for PAX7 expression. Also plays a role during pancreatic cell development. During type B pancreatic cell development, may be involved in the initiation of proximodistal patterning in the early pancreatic epithelium. Stimulates multipotent pancreatic progenitor cells proliferation and pancreatic growth by maintaining HES1 expression and PTF1A protein levels. During fetal stages of development, is required to maintain arterial identity and the responsiveness of arterial endothelial cells for VEGFA through regulation of KDR activation and NRP1 expression. Controls sprouting angiogenesis and subsequent vertical branch formation through regulation on tip cell differentiation. Negatively regulates goblet cell differentiation in intestine and controls secretory fat commitment through lateral inhibition in small intestine. Plays a role during inner ear development; negatively regulates auditory hair cell differentiation. Plays a role during nephron development through Notch signaling pathway. Regulates growth, blood pressure and energy homeostasis. This is Delta-like protein 1 (Dll1) from Rattus norvegicus (Rat).